A 134-amino-acid polypeptide reads, in one-letter code: MDNQQDNHIKLLNPLTLAYMGDAVLDQYVRTYIVLKLKSKPNKLHQMSKKYVSAKSQAQTLEYLMEQEWFTDEEMDILKRGRNAKSHTKAKNTDVQTYRKSSAIEAVIGFLYLEKREERLEALLNKIITIVNER.

Residue Asp-22 is part of the active site.

Belongs to the MrnC RNase family. Homodimer. Mg(2+) serves as cofactor.

The protein localises to the cytoplasm. Functionally, involved in correct processing of both the 5' and 3' ends of 23S rRNA precursor. Processes 30S rRNA precursor transcript even in absence of ribonuclease 3 (Rnc); Rnc processes 30S rRNA into smaller rRNA precursors. The polypeptide is Mini-ribonuclease 3 (Staphylococcus aureus (strain NCTC 8325 / PS 47)).